A 188-amino-acid chain; its full sequence is Elongation factor P (188 aa).

The protein belongs to the elongation factor P family.

Its subcellular location is the cytoplasm. It functions in the pathway protein biosynthesis; polypeptide chain elongation. Functionally, involved in peptide bond synthesis. Stimulates efficient translation and peptide-bond synthesis on native or reconstituted 70S ribosomes in vitro. Probably functions indirectly by altering the affinity of the ribosome for aminoacyl-tRNA, thus increasing their reactivity as acceptors for peptidyl transferase. The sequence is that of Elongation factor P from Bacteroides thetaiotaomicron (strain ATCC 29148 / DSM 2079 / JCM 5827 / CCUG 10774 / NCTC 10582 / VPI-5482 / E50).